Reading from the N-terminus, the 441-residue chain is MKLRSTALVKGFRQSAPYVNAHSGKTVVIMLGGEAIADPNFANIVNDIALLNSLGLQIVVVYGARPQISHLLTSQGYTTPYHKGIRVTDARALELVKQAAGQLQLDITARFSMGLNNTPMAGAQINVISGNFIIAQPLGIDDGIDYYHTGRIRRIDIDGIQRQLNQHSIVLLGPVASSVTGECFNLTSEEVATQLAIRLKADKLIGFCSEQGVIDLDGEVASEMLPNEAETALQRLIEAQEDDCGTARFLRGAVSACRAGVPRSHLISYKEDGALIQELFSLDGIGTQIVMASAEKVRGAGIDDIGGILDLIYPLEQEGILVRRSREQLEQEIEQFTIIERDGLIIACAALYPFPDEKIAEMACVAVHPDFRDGDRGVILLNRLRQQAKEQRLKHVFVLTTRSVHWFLEQGFIESDVEQLPMAKKALYNFQRRSKILVLAV.

The N-acetyltransferase domain occupies 295 to 434 (EKVRGAGIDD…KALYNFQRRS (140 aa)).

The protein belongs to the acetyltransferase family. ArgA subfamily.

The protein resides in the cytoplasm. It carries out the reaction L-glutamate + acetyl-CoA = N-acetyl-L-glutamate + CoA + H(+). It functions in the pathway amino-acid biosynthesis; L-arginine biosynthesis; N(2)-acetyl-L-ornithine from L-glutamate: step 1/4. The polypeptide is Amino-acid acetyltransferase (Photobacterium profundum (strain SS9)).